The primary structure comprises 561 residues: 4-coumarate--CoA ligase 3 (561 aa).

Positions 213, 214, 215, 216, 217, and 221 each coordinate ATP. (E)-4-coumaroyl-AMP is bound by residues Tyr263 and Ser267. Lys284 is a CoA binding site. Residues 286-355 form an SBD1 region; the sequence is EIGALLDLIQ…RRLPQAILGQ (70 aa). Residues Ala333, Gln355, Gly356, Thr360, and Met368 each contribute to the (E)-4-coumaroyl-AMP site. ATP contacts are provided by Gln355, Gly356, and Thr360. The tract at residues 356–423 is SBD2; sequence GYGMTEAGPV…IRGQQIMKEY (68 aa). Asp444 and Arg459 together coordinate ATP. Positions 461 and 465 each coordinate (E)-4-coumaroyl-AMP. Positions 467 and 468 each coordinate CoA. Lys550 contributes to the ATP binding site.

It belongs to the ATP-dependent AMP-binding enzyme family. The cofactor is Mg(2+). In terms of tissue distribution, preferentially expressed in leaves, flowers and siliques.

The enzyme catalyses (E)-4-coumarate + ATP + CoA = (E)-4-coumaroyl-CoA + AMP + diphosphate. It catalyses the reaction (E)-caffeate + ATP + CoA = (E)-caffeoyl-CoA + AMP + diphosphate. The catalysed reaction is (E)-ferulate + ATP + CoA = (E)-feruloyl-CoA + AMP + diphosphate. It carries out the reaction (E)-4-coumarate + ATP + H(+) = (E)-4-coumaroyl-AMP + diphosphate. The enzyme catalyses (E)-4-coumaroyl-AMP + CoA = (E)-4-coumaroyl-CoA + AMP + H(+). It catalyses the reaction (E)-caffeate + ATP + H(+) = (E)-caffeoyl-AMP + diphosphate. The catalysed reaction is (E)-caffeoyl-AMP + CoA = (E)-caffeoyl-CoA + AMP + H(+). It carries out the reaction (E)-ferulate + ATP + H(+) = (E)-feruloyl-AMP + diphosphate. The enzyme catalyses (E)-feruloyl-AMP + CoA = (E)-feruloyl-CoA + AMP + H(+). Its pathway is phytoalexin biosynthesis; 3,4',5-trihydroxystilbene biosynthesis; 3,4',5-trihydroxystilbene from trans-4-coumarate: step 1/2. Functionally, produces CoA thioesters of a variety of hydroxy- and methoxy-substituted cinnamic acids, which are used to synthesize several phenylpropanoid-derived compounds, including anthocyanins, flavonoids, isoflavonoids, coumarins, lignin, suberin and wall-bound phenolics. Follows a two-step reaction mechanism, wherein the carboxylate substrate first undergoes adenylation by ATP, followed by a thioesterification in the presence of CoA to yield the final CoA thioesters. The polypeptide is 4-coumarate--CoA ligase 3 (Arabidopsis thaliana (Mouse-ear cress)).